The primary structure comprises 381 residues: Malonyl-CoA-acyl carrier protein transacylase, mitochondrial (381 aa).

Residues Ser-151 and His-268 contribute to the active site. Lys-312 is subject to N6-succinyllysine.

Belongs to the type II malonyltransferase family. In terms of tissue distribution, expressed in retinal ganglion cells.

It is found in the mitochondrion. It catalyses the reaction holo-[ACP] + malonyl-CoA = malonyl-[ACP] + CoA. It participates in lipid metabolism; fatty acid biosynthesis. Its function is as follows. Catalyzes the transfer of a malonyl moiety from malonyl-CoA to the free thiol group of the phosphopantetheine arm of the mitochondrial ACP protein (NDUFAB1). This suggests the existence of the biosynthesis of fatty acids in mitochondria. This chain is Malonyl-CoA-acyl carrier protein transacylase, mitochondrial, found in Mus musculus (Mouse).